Here is an 807-residue protein sequence, read N- to C-terminus: Spondin-1 (807 aa).

The first 28 residues, 1–28, serve as a signal peptide directing secretion; that stretch reads MRLSPVSLRLSRGPALLALALPLAAALA. One can recognise a Reelin domain in the interval 29-194; it reads FSDETLDKVT…DPTLDGVTDR (166 aa). Disulfide bonds link Cys-44-Cys-128, Cys-156-Cys-182, Cys-199-Cys-336, Cys-200-Cys-340, Cys-202-Cys-415, Cys-443-Cys-480, Cys-454-Cys-489, Cys-459-Cys-494, Cys-502-Cys-538, Cys-513-Cys-517, Cys-548-Cys-554, Cys-559-Cys-595, Cys-570-Cys-574, Cys-605-Cys-610, Cys-615-Cys-650, Cys-626-Cys-630, and Cys-660-Cys-665. Positions 195–388 constitute a Spondin domain; sequence PILDCCACGT…LTSLDHPQSP (194 aa). A glycan (N-linked (GlcNAc...) asparagine) is linked at Asn-214. Ca(2+)-binding residues include Asp-325, Asp-354, and Asp-358. 5 TSP type-1 domains span residues 442–495, 501–555, 558–611, 614–666, and 668–721; these read TCIY…PGCS, TCTM…EECS, SCLV…PECH, PCLL…PECP, and DCEL…RKCL. Residue Asn-681 is glycosylated (N-linked (GlcNAc...) asparagine). The span at 732–746 shows a compositional bias: basic and acidic residues; sequence REARESRRSEQLREE. The interval 732 to 752 is disordered; the sequence is REARESRRSEQLREESDGEQF. One can recognise a TSP type-1 6 domain in the interval 754–806; sequence GCRMRPWTAWSECTKLCGGGIQERYMTVKKRFKSSQFTSCKDKKEIRACNVHP.

Binds to the central extracellular domain of APP and inhibits beta-secretase cleavage of APP.

It localises to the secreted. It is found in the extracellular space. Its subcellular location is the extracellular matrix. In terms of biological role, cell adhesion protein that promotes the attachment of spinal cord and sensory neuron cells and the outgrowth of neurites in vitro. May contribute to the growth and guidance of axons in both the spinal cord and the PNS. The sequence is that of Spondin-1 (Spon1) from Mus musculus (Mouse).